The following is a 125-amino-acid chain: Large ribosomal subunit protein bL12 (125 aa).

The protein belongs to the bacterial ribosomal protein bL12 family. As to quaternary structure, homodimer. Part of the ribosomal stalk of the 50S ribosomal subunit. Forms a multimeric L10(L12)X complex, where L10 forms an elongated spine to which 2 to 4 L12 dimers bind in a sequential fashion. Binds GTP-bound translation factors.

Functionally, forms part of the ribosomal stalk which helps the ribosome interact with GTP-bound translation factors. Is thus essential for accurate translation. The sequence is that of Large ribosomal subunit protein bL12 from Thermoanaerobacter pseudethanolicus (strain ATCC 33223 / 39E) (Clostridium thermohydrosulfuricum).